We begin with the raw amino-acid sequence, 325 residues long: L-lactate dehydrogenase 1 (325 aa).

NAD(+) is bound by residues V17, D38, K43, Y68, and 82 to 83 (GA). Substrate contacts are provided by residues Q85, R91, and 123-126 (NPVD). NAD(+)-binding positions include 121-123 (AAN) and S146. Residue 151 to 154 (DTAR) coordinates substrate. R156 and H171 together coordinate beta-D-fructose 1,6-bisphosphate. Residue H178 is the Proton acceptor of the active site. Y223 carries the phosphotyrosine modification. T232 contributes to the substrate binding site.

The protein belongs to the LDH/MDH superfamily. LDH family. As to quaternary structure, homotetramer.

Its subcellular location is the cytoplasm. It catalyses the reaction (S)-lactate + NAD(+) = pyruvate + NADH + H(+). It participates in fermentation; pyruvate fermentation to lactate; (S)-lactate from pyruvate: step 1/1. Its activity is regulated as follows. Allosterically activated by fructose 1,6-bisphosphate (FBP). Catalyzes the conversion of lactate to pyruvate. In Lactococcus lactis subsp. cremoris (Streptococcus cremoris), this protein is L-lactate dehydrogenase 1.